The chain runs to 27 residues: Conotoxin (27 aa).

Cystine bridges form between Cys2-Cys16, Cys6-Cys18, and Cys12-Cys23. At Asn27 the chain carries Asparagine amide.

As to expression, expressed by the venom duct.

It is found in the secreted. Its function is as follows. Probable neurotoxin that inhibits ion channels. This is Conotoxin from Conus amadis (Amadis cone).